Here is a 646-residue protein sequence, read N- to C-terminus: Serine/threonine-protein kinase PLK3 (646 aa).

Residues 1 to 35 (MEPAAGFLSPRPFQRAAAAPAPPAGPGPPPSALRG) are disordered. A compositionally biased stretch (low complexity) spans 10–19 (PRPFQRAAAA). Residues 20-31 (PAPPAGPGPPPS) are compositionally biased toward pro residues. One can recognise a Protein kinase domain in the interval 62-314 (YLKGRLLGKG…IDQILRHDFF (253 aa)). ATP-binding positions include 68 to 76 (LGKGGFARC) and lysine 91. Aspartate 185 functions as the Proton acceptor in the catalytic mechanism. The disordered stretch occupies residues 381 to 417 (GHQDARPEAPAASGPAPVSLVETAPEDSSPRGTLASS). 2 POLO box domains span residues 463–541 (WVSK…YMEQ) and 562–645 (LLLQ…DRSP).

This sequence belongs to the protein kinase superfamily. Ser/Thr protein kinase family. CDC5/Polo subfamily. As to quaternary structure, interacts (via the POLO-box domain) with CIB1; leading to inhibit PLK3 kinase activity. Interacts with GOLGB1. Phosphorylated in an ATM-dependent manner following DNA damage. Phosphorylated as cells enter mitosis and dephosphorylated as cells exit mitosis. In terms of tissue distribution, transcripts are highly detected in placenta, lung, followed by skeletal muscle, heart, pancreas, ovaries and kidney and weakly detected in liver and brain. May have a short half-live. In cells of hematopoietic origin, strongly and exclusively detected in terminally differentiated macrophages. Transcript expression appears to be down-regulated in primary lung tumor.

The protein resides in the cytoplasm. Its subcellular location is the nucleus. It is found in the nucleolus. The protein localises to the golgi apparatus. It localises to the cytoskeleton. The protein resides in the microtubule organizing center. Its subcellular location is the centrosome. It carries out the reaction L-seryl-[protein] + ATP = O-phospho-L-seryl-[protein] + ADP + H(+). The enzyme catalyses L-threonyl-[protein] + ATP = O-phospho-L-threonyl-[protein] + ADP + H(+). In terms of biological role, serine/threonine-protein kinase involved in cell cycle regulation, response to stress and Golgi disassembly. Polo-like kinases act by binding and phosphorylating proteins that are already phosphorylated on a specific motif recognized by the POLO box domains. Phosphorylates ATF2, BCL2L1, CDC25A, CDC25C, CHEK2, HIF1A, JUN, p53/TP53, p73/TP73, PTEN, TOP2A and VRK1. Involved in cell cycle regulation: required for entry into S phase and cytokinesis. Phosphorylates BCL2L1, leading to regulate the G2 checkpoint and progression to cytokinesis during mitosis. Plays a key role in response to stress: rapidly activated upon stress stimulation, such as ionizing radiation, reactive oxygen species (ROS), hyperosmotic stress, UV irradiation and hypoxia. Involved in DNA damage response and G1/S transition checkpoint by phosphorylating CDC25A, p53/TP53 and p73/TP73. Phosphorylates p53/TP53 in response to reactive oxygen species (ROS), thereby promoting p53/TP53-mediated apoptosis. Phosphorylates CHEK2 in response to DNA damage, promoting the G2/M transition checkpoint. Phosphorylates the transcription factor p73/TP73 in response to DNA damage, leading to inhibit p73/TP73-mediated transcriptional activation and pro-apoptotic functions. Phosphorylates HIF1A and JUN is response to hypoxia. Phosphorylates ATF2 following hyperosmotic stress in corneal epithelium. Also involved in Golgi disassembly during the cell cycle: part of a MEK1/MAP2K1-dependent pathway that induces Golgi fragmentation during mitosis by mediating phosphorylation of VRK1. May participate in endomitotic cell cycle, a form of mitosis in which both karyokinesis and cytokinesis are interrupted and is a hallmark of megakaryocyte differentiation, via its interaction with CIB1. The sequence is that of Serine/threonine-protein kinase PLK3 (PLK3) from Homo sapiens (Human).